We begin with the raw amino-acid sequence, 187 residues long: UPF0301 protein KPK_0728 (187 aa).

Belongs to the UPF0301 (AlgH) family.

The chain is UPF0301 protein KPK_0728 from Klebsiella pneumoniae (strain 342).